The sequence spans 286 residues: 4-diphosphocytidyl-2-C-methyl-D-erythritol kinase (286 aa).

Lys11 is an active-site residue. Residue Pro93–Ser103 coordinates ATP. Residue Asp135 is part of the active site.

The protein belongs to the GHMP kinase family. IspE subfamily.

The catalysed reaction is 4-CDP-2-C-methyl-D-erythritol + ATP = 4-CDP-2-C-methyl-D-erythritol 2-phosphate + ADP + H(+). Its pathway is isoprenoid biosynthesis; isopentenyl diphosphate biosynthesis via DXP pathway; isopentenyl diphosphate from 1-deoxy-D-xylulose 5-phosphate: step 3/6. Catalyzes the phosphorylation of the position 2 hydroxy group of 4-diphosphocytidyl-2C-methyl-D-erythritol. This chain is 4-diphosphocytidyl-2-C-methyl-D-erythritol kinase, found in Chlorobaculum parvum (strain DSM 263 / NCIMB 8327) (Chlorobium vibrioforme subsp. thiosulfatophilum).